The following is a 1770-amino-acid chain: Transposon Ty2-GR1 Gag-Pol polyprotein (1770 aa).

Polar residues-rich tracts occupy residues 1 to 11 (MESQQLHQNPH), 19 to 39 (ASVTSKEVPSNQDPLAVSASN), and 49 to 60 (KVNSQQETTPGT). 2 disordered regions span residues 1 to 86 (MESQ…GQYQ) and 360 to 453 (HSEY…LPDH). The RNA-binding stretch occupies residues 295–397 (ENNINVSDRL…SSKPRAAKAH (103 aa)). Residues 369–381 (TSPNTTNTKVTTR) are compositionally biased toward low complexity. A compositionally biased stretch (polar residues) spans 399–408 (IATSSKFSRV). Asp-457 serves as the catalytic For protease activity; shared with dimeric partner. The segment at 579 to 636 (NVNKSKSVNKYPYPLIHRMLGHANFRSIQKSLKKNAVTYLKESDIEWSNASTYQCPDC) is integrase-type zinc finger-like. An Integrase catalytic domain is found at 656–831 (ESYEPFQYLH…AGLDITTILP (176 aa)). Asp-667 and Asp-732 together coordinate Mg(2+). 4 disordered regions span residues 1004-1034 (MGGTVESDTTSPRHSSTFTARNQNRPGSTNE), 1059-1135 (TEEP…KSSK), 1146-1165 (LPLPDLTHKSPTDTSDVSKD), and 1170-1205 (HSRQTNSSLGGMDDSNVLTTTKSKKRSLEDNETEIE). 2 stretches are compositionally biased toward polar residues: residues 1009 to 1034 (ESDTTSPRHSSTFTARNQNRPGSTNE) and 1065 to 1082 (QRNSDTNIKYRTTNSTPS). Basic and acidic residues predominate over residues 1151 to 1165 (LTHKSPTDTSDVSKD). A Bipartite nuclear localization signal motif is present at residues 1193-1227 (KKRSLEDNETEIEVSRDTWNNKNMRSLEPPRSKKR). In terms of domain architecture, Reverse transcriptase Ty1/copia-type spans 1353–1491 (NDYYITQLDI…DILGLEIKYQ (139 aa)). The Mg(2+) site is built by Asp-1361, Asp-1442, Asp-1443, Asp-1625, Glu-1667, and Asp-1700. The RNase H Ty1/copia-type domain occupies 1625-1767 (DASYGNQPYY…IKTFKLLTNK (143 aa)).

The capsid protein forms a homotrimer, from which the VLPs are assembled. The protease is a homodimer, whose active site consists of two apposed aspartic acid residues. Initially, virus-like particles (VLPs) are composed of the structural unprocessed proteins Gag and Gag-Pol, and also contain the host initiator methionine tRNA (tRNA(i)-Met) which serves as a primer for minus-strand DNA synthesis, and a dimer of genomic Ty RNA. Processing of the polyproteins occurs within the particle and proceeds by an ordered pathway, called maturation. First, the protease (PR) is released by autocatalytic cleavage of the Gag-Pol polyprotein, and this cleavage is a prerequisite for subsequent processing at the remaining sites to release the mature structural and catalytic proteins. Maturation takes place prior to the RT reaction and is required to produce transposition-competent VLPs.

It localises to the cytoplasm. The protein resides in the nucleus. It catalyses the reaction DNA(n) + a 2'-deoxyribonucleoside 5'-triphosphate = DNA(n+1) + diphosphate. The enzyme catalyses Endonucleolytic cleavage to 5'-phosphomonoester.. Its function is as follows. Capsid protein (CA) is the structural component of the virus-like particle (VLP), forming the shell that encapsulates the retrotransposons dimeric RNA genome. The particles are assembled from trimer-clustered units and there are holes in the capsid shells that allow for the diffusion of macromolecules. CA also has nucleocapsid-like chaperone activity, promoting primer tRNA(i)-Met annealing to the multipartite primer-binding site (PBS), dimerization of Ty2 RNA and initiation of reverse transcription. In terms of biological role, the aspartyl protease (PR) mediates the proteolytic cleavages of the Gag and Gag-Pol polyproteins after assembly of the VLP. Reverse transcriptase/ribonuclease H (RT) is a multifunctional enzyme that catalyzes the conversion of the retro-elements RNA genome into dsDNA within the VLP. The enzyme displays a DNA polymerase activity that can copy either DNA or RNA templates, and a ribonuclease H (RNase H) activity that cleaves the RNA strand of RNA-DNA heteroduplexes during plus-strand synthesis and hydrolyzes RNA primers. The conversion leads to a linear dsDNA copy of the retrotransposon that includes long terminal repeats (LTRs) at both ends. Functionally, integrase (IN) targets the VLP to the nucleus, where a subparticle preintegration complex (PIC) containing at least integrase and the newly synthesized dsDNA copy of the retrotransposon must transit the nuclear membrane. Once in the nucleus, integrase performs the integration of the dsDNA into the host genome. The protein is Transposon Ty2-GR1 Gag-Pol polyprotein (TY2B-GR1) of Saccharomyces cerevisiae (strain ATCC 204508 / S288c) (Baker's yeast).